The primary structure comprises 55 residues: Large ribosomal subunit protein bL33 (55 aa).

This sequence belongs to the bacterial ribosomal protein bL33 family.

The protein is Large ribosomal subunit protein bL33 of Rhizobium johnstonii (strain DSM 114642 / LMG 32736 / 3841) (Rhizobium leguminosarum bv. viciae).